We begin with the raw amino-acid sequence, 647 residues long: 1-deoxy-D-xylulose-5-phosphate synthase (647 aa).

Thiamine diphosphate contacts are provided by residues histidine 88 and 129 to 131; that span reads GHA. Mg(2+) is bound at residue aspartate 160. Residues 161–162, asparagine 189, tyrosine 300, and glutamate 377 each bind thiamine diphosphate; that span reads GA. Position 189 (asparagine 189) interacts with Mg(2+).

This sequence belongs to the transketolase family. DXPS subfamily. Homodimer. Requires Mg(2+) as cofactor. Thiamine diphosphate is required as a cofactor.

It carries out the reaction D-glyceraldehyde 3-phosphate + pyruvate + H(+) = 1-deoxy-D-xylulose 5-phosphate + CO2. The protein operates within metabolic intermediate biosynthesis; 1-deoxy-D-xylulose 5-phosphate biosynthesis; 1-deoxy-D-xylulose 5-phosphate from D-glyceraldehyde 3-phosphate and pyruvate: step 1/1. Functionally, catalyzes the acyloin condensation reaction between C atoms 2 and 3 of pyruvate and glyceraldehyde 3-phosphate to yield 1-deoxy-D-xylulose-5-phosphate (DXP). The chain is 1-deoxy-D-xylulose-5-phosphate synthase from Dehalococcoides mccartyi (strain CBDB1).